Consider the following 522-residue polypeptide: Calcium-dependent protein kinase 4 (522 aa).

Positions 1 to 10 (MGACFSSHTA) are enriched in polar residues. Residues 1–43 (MGACFSSHTATAAADGGSGKRQQRKGDHKGKLPDGGGGEKEKE) form a disordered region. Glycine 2 is lipidated: N-myristoyl glycine. The span at 29–43 (KGKLPDGGGGEKEKE) shows a compositional bias: basic and acidic residues. Residues 59 to 319 (YQVGRLLGHG…AAQALSHPWV (261 aa)) form the Protein kinase domain. Residues 65–73 (LGHGQFGYT) and lysine 88 each bind ATP. Catalysis depends on aspartate 185, which acts as the Proton acceptor. The segment at 325 to 355 (ASEIPVDISVLSNMRQFVKYSRFKQFALRAL) is autoinhibitory domain. 4 consecutive EF-hand domains span residues 362–397 (EELA…DLPW), 399–434 (LKGP…IHQM), 441–476 (RWGL…GLKG), and 481–508 (LLEE…ASMS). Aspartate 375, aspartate 377, serine 379, serine 381, glutamate 386, aspartate 412, asparagine 414, aspartate 416, glutamate 423, aspartate 454, aspartate 456, aspartate 458, tyrosine 460, glutamate 465, aspartate 486, aspartate 488, aspartate 490, arginine 492, and glutamate 497 together coordinate Ca(2+).

The protein belongs to the protein kinase superfamily. Ser/Thr protein kinase family. CDPK subfamily.

It localises to the membrane. The catalysed reaction is L-seryl-[protein] + ATP = O-phospho-L-seryl-[protein] + ADP + H(+). It carries out the reaction L-threonyl-[protein] + ATP = O-phospho-L-threonyl-[protein] + ADP + H(+). Activated by calcium. Autophosphorylation may play an important role in the regulation of the kinase activity. May play a role in signal transduction pathways that involve calcium as a second messenger. This chain is Calcium-dependent protein kinase 4, found in Oryza sativa subsp. japonica (Rice).